The following is a 376-amino-acid chain: Ciliogenesis-associated TTC17-interacting protein (376 aa).

The interval 355 to 376 (TQEPNDPFVSSHHASPFRNVSH) is disordered.

It belongs to the CATIP family.

Its subcellular location is the nucleus. The protein localises to the cytoplasm. It is found in the cell membrane. The protein resides in the cytoskeleton. Its function is as follows. Plays a role in primary ciliogenesis by modulating actin polymerization. This Xenopus laevis (African clawed frog) protein is Ciliogenesis-associated TTC17-interacting protein (catip).